The primary structure comprises 192 residues: Pyruvate kinase (192 aa).

Position 41 (Arg-41) interacts with substrate. Residues Asn-43, Ser-45, Asp-75, and Thr-76 each contribute to the K(+) site. 43 to 46 (NFSH) contacts ATP.

It belongs to the pyruvate kinase family. Mg(2+) serves as cofactor. Requires K(+) as cofactor.

The enzyme catalyses pyruvate + ATP = phosphoenolpyruvate + ADP + H(+). Its pathway is carbohydrate degradation; glycolysis; pyruvate from D-glyceraldehyde 3-phosphate: step 5/5. In Spiroplasma citri, this protein is Pyruvate kinase (pyk).